The following is a 474-amino-acid chain: PTS system N-acetylmuramic acid-specific EIIBC component (474 aa).

One can recognise a PTS EIIB type-1 domain in the interval 1–89 (MAKEISSELL…SELLGDAPVQ (89 aa)). Residues 1 to 123 (MAKEISSELL…LAKFATIFTP (123 aa)) lie on the Cytoplasmic side of the membrane. Cys-29 (phosphocysteine intermediate; for EIIB activity) is an active-site residue. Residues 115–474 (AKFATIFTPL…LFGCRNVNLD (360 aa)) enclose the PTS EIIC type-1 domain. The helical transmembrane segment at 124–144 (LIPGFIAAGLLLGIATLIATV) threads the bilayer. The Periplasmic segment spans residues 145–157 (MHVPADAQGTLPD). A helical membrane pass occupies residues 158-178 (ALNFMKVFSKGLFTFLVILVG). Residues 179 to 180 (YN) lie on the Cytoplasmic side of the membrane. Residues 181-201 (AAQAFGGTGVNGAIIAALFLL) traverse the membrane as a helical segment. Residues 202–217 (GYNPAATTGYYAGFHD) lie on the Periplasmic side of the membrane. A helical membrane pass occupies residues 218–238 (FFGLPIDPRGNIIGVLIAAWA). Topologically, residues 239–260 (CARIEGMVRRFMPDDLDMLLTS) are cytoplasmic. The chain crosses the membrane as a helical span at residues 261–281 (LITLLITATLAYLIIMPLGGW). Residues 282–301 (LFEGMSWLFMHLNSNPFGCA) lie on the Periplasmic side of the membrane. A helical membrane pass occupies residues 302-322 (VLAGLFLIAVVFGVHQGFIPV). Residues 323–334 (YLALMDSQGFNS) lie on the Cytoplasmic side of the membrane. The helical transmembrane segment at 335–355 (LFPILSMAGAGQVGAALALYW) threads the bilayer. The Periplasmic segment spans residues 356–368 (RAQPHSALRSQVR). Residues 369–389 (GAIIPGLLGVGEPLIYGVTLP) traverse the membrane as a helical segment. Residues 390-393 (RMKP) lie on the Cytoplasmic side of the membrane. The helical transmembrane segment at 394–414 (FVTACLGGAAGGLFIGLIAWW) threads the bilayer. Residues 415 to 440 (GLPMGLNSAFGPSGLVALPLMTSAQG) lie on the Periplasmic side of the membrane. The helical transmembrane segment at 441–461 (ILPAMAVYAGGILVAWVCGFI) threads the bilayer. The Cytoplasmic portion of the chain corresponds to 462-474 (FTTLFGCRNVNLD).

Its subcellular location is the cell inner membrane. It carries out the reaction N-acetyl-beta-D-muramate(out) + N(pros)-phospho-L-histidyl-[protein] = N-acetyl-beta-D-muramate 6-phosphate(in) + L-histidyl-[protein]. In terms of biological role, the phosphoenolpyruvate-dependent sugar phosphotransferase system (sugar PTS), a major carbohydrate active transport system, catalyzes the phosphorylation of incoming sugar substrates concomitantly with their translocation across the cell membrane. This system is involved in N-acetylmuramic acid (MurNAc) transport, yielding cytoplasmic MurNAc-6-P. Is also able to take up anhydro-N-acetylmuramic acid (anhMurNAc), but cannot phosphorylate the carbon 6, probably because of the 1,6-anhydro ring. This chain is PTS system N-acetylmuramic acid-specific EIIBC component (murP), found in Shigella flexneri.